The following is a 316-amino-acid chain: 4-diphosphocytidyl-2-C-methyl-D-erythritol kinase (316 aa).

The active site involves K23. Residue 108–118 participates in ATP binding; sequence PVAGGMAGGSA. Residue D150 is part of the active site.

This sequence belongs to the GHMP kinase family. IspE subfamily.

The enzyme catalyses 4-CDP-2-C-methyl-D-erythritol + ATP = 4-CDP-2-C-methyl-D-erythritol 2-phosphate + ADP + H(+). Its pathway is isoprenoid biosynthesis; isopentenyl diphosphate biosynthesis via DXP pathway; isopentenyl diphosphate from 1-deoxy-D-xylulose 5-phosphate: step 3/6. Catalyzes the phosphorylation of the position 2 hydroxy group of 4-diphosphocytidyl-2C-methyl-D-erythritol. The sequence is that of 4-diphosphocytidyl-2-C-methyl-D-erythritol kinase from Mycolicibacterium paratuberculosis (strain ATCC BAA-968 / K-10) (Mycobacterium paratuberculosis).